The following is a 103-amino-acid chain: Large ribosomal subunit protein uL24 (103 aa).

This sequence belongs to the universal ribosomal protein uL24 family. As to quaternary structure, part of the 50S ribosomal subunit.

Its function is as follows. One of two assembly initiator proteins, it binds directly to the 5'-end of the 23S rRNA, where it nucleates assembly of the 50S subunit. In terms of biological role, one of the proteins that surrounds the polypeptide exit tunnel on the outside of the subunit. In Mannheimia succiniciproducens (strain KCTC 0769BP / MBEL55E), this protein is Large ribosomal subunit protein uL24.